The chain runs to 698 residues: Methionine--tRNA ligase (698 aa).

A 'HIGH' region motif is present at residues 21 to 31; sequence PYANGPLHFGH. Zn(2+) is bound by residues Cys-153, Cys-156, Cys-166, and Cys-169. The 'KMSKS' region signature appears at 341–345; that stretch reads QFSKS. Residue Lys-344 coordinates ATP. A tRNA-binding domain is found at 599-698; it reads DFRKLDLRVG…EDVAPGSLVS (100 aa).

Belongs to the class-I aminoacyl-tRNA synthetase family. MetG type 1 subfamily. Homodimer. Requires Zn(2+) as cofactor.

It is found in the cytoplasm. It catalyses the reaction tRNA(Met) + L-methionine + ATP = L-methionyl-tRNA(Met) + AMP + diphosphate. In terms of biological role, is required not only for elongation of protein synthesis but also for the initiation of all mRNA translation through initiator tRNA(fMet) aminoacylation. This Protochlamydia amoebophila (strain UWE25) protein is Methionine--tRNA ligase.